Reading from the N-terminus, the 376-residue chain is Phosphoserine aminotransferase (376 aa).

Arg-42 contributes to the L-glutamate binding site. Residues Trp-104, Thr-163, Asp-188, and Gln-211 each contribute to the pyridoxal 5'-phosphate site. Lys-212 carries the N6-(pyridoxal phosphate)lysine modification. Pyridoxal 5'-phosphate is bound at residue 253–254; it reads NT.

Belongs to the class-V pyridoxal-phosphate-dependent aminotransferase family. SerC subfamily. As to quaternary structure, homodimer. Pyridoxal 5'-phosphate is required as a cofactor.

The protein resides in the cytoplasm. It carries out the reaction O-phospho-L-serine + 2-oxoglutarate = 3-phosphooxypyruvate + L-glutamate. The enzyme catalyses 4-(phosphooxy)-L-threonine + 2-oxoglutarate = (R)-3-hydroxy-2-oxo-4-phosphooxybutanoate + L-glutamate. It participates in amino-acid biosynthesis; L-serine biosynthesis; L-serine from 3-phospho-D-glycerate: step 2/3. The protein operates within cofactor biosynthesis; pyridoxine 5'-phosphate biosynthesis; pyridoxine 5'-phosphate from D-erythrose 4-phosphate: step 3/5. Its function is as follows. Catalyzes the reversible conversion of 3-phosphohydroxypyruvate to phosphoserine and of 3-hydroxy-2-oxo-4-phosphonooxybutanoate to phosphohydroxythreonine. This Bordetella avium (strain 197N) protein is Phosphoserine aminotransferase.